We begin with the raw amino-acid sequence, 1072 residues long: Carbamoyl phosphate synthase large chain (1072 aa).

Positions 1–401 (MPKRLDINTI…SLLKAVRSLE (401 aa)) are carboxyphosphate synthetic domain. 12 residues coordinate ATP: arginine 129, arginine 169, glycine 175, glycine 176, lysine 208, isoleucine 210, glutamate 215, glycine 241, valine 242, histidine 243, glutamine 284, and glutamate 298. The ATP-grasp 1 domain maps to 133-327 (RTLMQDLNEP…IAKLAAKIAV (195 aa)). Glutamine 284, glutamate 298, and asparagine 300 together coordinate Mg(2+). Residues glutamine 284, glutamate 298, and asparagine 300 each coordinate Mn(2+). The oligomerization domain stretch occupies residues 402-546 (LGIYHLELDH…YSTYADENES (145 aa)). Positions 547 to 929 (IVTDRKSVVV…ALYKGLVASG (383 aa)) are carbamoyl phosphate synthetic domain. The 191-residue stretch at 671–861 (EAALTKLGIP…MANVATKVIL (191 aa)) folds into the ATP-grasp 2 domain. Residues arginine 707, arginine 746, glutamate 752, glycine 777, valine 778, histidine 779, serine 780, glutamine 820, and glutamate 832 each coordinate ATP. Mg(2+)-binding residues include glutamine 820, glutamate 832, and asparagine 834. Residues glutamine 820, glutamate 832, and asparagine 834 each contribute to the Mn(2+) site. The MGS-like domain occupies 930 to 1072 (INIPTHGSVI…QTKRHEVVHA (143 aa)). The allosteric domain stretch occupies residues 930 to 1072 (INIPTHGSVI…QTKRHEVVHA (143 aa)).

This sequence belongs to the CarB family. In terms of assembly, composed of two chains; the small (or glutamine) chain promotes the hydrolysis of glutamine to ammonia, which is used by the large (or ammonia) chain to synthesize carbamoyl phosphate. Tetramer of heterodimers (alpha,beta)4. It depends on Mg(2+) as a cofactor. Mn(2+) is required as a cofactor.

It carries out the reaction hydrogencarbonate + L-glutamine + 2 ATP + H2O = carbamoyl phosphate + L-glutamate + 2 ADP + phosphate + 2 H(+). The catalysed reaction is hydrogencarbonate + NH4(+) + 2 ATP = carbamoyl phosphate + 2 ADP + phosphate + 2 H(+). It functions in the pathway amino-acid biosynthesis; L-arginine biosynthesis; carbamoyl phosphate from bicarbonate: step 1/1. The protein operates within pyrimidine metabolism; UMP biosynthesis via de novo pathway; (S)-dihydroorotate from bicarbonate: step 1/3. Functionally, large subunit of the glutamine-dependent carbamoyl phosphate synthetase (CPSase). CPSase catalyzes the formation of carbamoyl phosphate from the ammonia moiety of glutamine, carbonate, and phosphate donated by ATP, constituting the first step of 2 biosynthetic pathways, one leading to arginine and/or urea and the other to pyrimidine nucleotides. The large subunit (synthetase) binds the substrates ammonia (free or transferred from glutamine from the small subunit), hydrogencarbonate and ATP and carries out an ATP-coupled ligase reaction, activating hydrogencarbonate by forming carboxy phosphate which reacts with ammonia to form carbamoyl phosphate. In Bacillus cereus (strain AH187), this protein is Carbamoyl phosphate synthase large chain.